The following is a 681-amino-acid chain: Transmembrane protein 168-A (681 aa).

A run of 9 helical transmembrane segments spans residues Phe-16–Met-36, Met-47–Tyr-67, Ser-73–Leu-93, Pro-135–Ser-155, Leu-156–Ile-176, Leu-184–Leu-204, Phe-252–Leu-272, Val-281–Val-301, and Leu-346–Ala-365. An N-linked (GlcNAc...) asparagine glycan is attached at Asn-517.

Belongs to the TMEM168 family.

The protein localises to the nucleus membrane. Its function is as follows. Plays a key role in maintaining the cardiac electrical stability by modulating cell surface expression of SCN5A. The chain is Transmembrane protein 168-A (tmem168a) from Danio rerio (Zebrafish).